The following is a 360-amino-acid chain: UDP-3-O-acylglucosamine N-acyltransferase (360 aa).

His-256 functions as the Proton acceptor in the catalytic mechanism. The interval Glu-341–Gly-360 is disordered. Residues Ala-349–Gly-360 show a composition bias toward basic and acidic residues.

It belongs to the transferase hexapeptide repeat family. LpxD subfamily. In terms of assembly, homotrimer.

It carries out the reaction a UDP-3-O-[(3R)-3-hydroxyacyl]-alpha-D-glucosamine + a (3R)-hydroxyacyl-[ACP] = a UDP-2-N,3-O-bis[(3R)-3-hydroxyacyl]-alpha-D-glucosamine + holo-[ACP] + H(+). The protein operates within bacterial outer membrane biogenesis; LPS lipid A biosynthesis. Catalyzes the N-acylation of UDP-3-O-acylglucosamine using 3-hydroxyacyl-ACP as the acyl donor. Is involved in the biosynthesis of lipid A, a phosphorylated glycolipid that anchors the lipopolysaccharide to the outer membrane of the cell. The polypeptide is UDP-3-O-acylglucosamine N-acyltransferase (Rhodopseudomonas palustris (strain ATCC BAA-98 / CGA009)).